The chain runs to 274 residues: NH(3)-dependent NAD(+) synthetase (274 aa).

46–53 (GISGGQDS) contacts ATP. Residue Asp52 participates in Mg(2+) binding. Position 140 (Arg140) interacts with deamido-NAD(+). Thr160 contacts ATP. Glu165 is a Mg(2+) binding site. Residues Lys173 and Asp180 each contribute to the deamido-NAD(+) site. ATP-binding residues include Lys189 and Thr211. 260–261 (HK) serves as a coordination point for deamido-NAD(+).

This sequence belongs to the NAD synthetase family. In terms of assembly, homodimer.

It carries out the reaction deamido-NAD(+) + NH4(+) + ATP = AMP + diphosphate + NAD(+) + H(+). It participates in cofactor biosynthesis; NAD(+) biosynthesis; NAD(+) from deamido-NAD(+) (ammonia route): step 1/1. In terms of biological role, catalyzes the ATP-dependent amidation of deamido-NAD to form NAD. Uses ammonia as a nitrogen source. This chain is NH(3)-dependent NAD(+) synthetase, found in Listeria monocytogenes serovar 1/2a (strain ATCC BAA-679 / EGD-e).